Reading from the N-terminus, the 419-residue chain is Tol-Pal system protein TolB (419 aa).

Residues 1 to 19 (MCNRIISLFLLLFTGQVIA) form the signal peptide.

The protein belongs to the TolB family. In terms of assembly, the Tol-Pal system is composed of five core proteins: the inner membrane proteins TolA, TolQ and TolR, the periplasmic protein TolB and the outer membrane protein Pal. They form a network linking the inner and outer membranes and the peptidoglycan layer.

Its subcellular location is the periplasm. Functionally, part of the Tol-Pal system, which plays a role in outer membrane invagination during cell division and is important for maintaining outer membrane integrity. In Legionella pneumophila (strain Paris), this protein is Tol-Pal system protein TolB.